Here is a 151-residue protein sequence, read N- to C-terminus: HTH-type transcriptional regulator FL11 (151 aa).

Residues 5–66 enclose the HTH asnC-type domain; it reads LDEIDKKIIK…IIDPEALGYS (62 aa). Residues 24–43 constitute a DNA-binding region (H-T-H motif); it reads LREISKITGLAESTIHERIR. 98-104 is an L-arginine binding site; sequence ETTGDYD. Residues Asn-118, Asp-122, and 133–135 contribute to the L-lysine site; that span reads THT. Residues Asp-122 and 133–135 contribute to the L-arginine site; that span reads THT.

In terms of assembly, homodimer. Binds DNA as a dimer and an octamer. The octamer formed with lysine is stable in solution, but the octamer formed with arginine is unstable without DNA. When crystallized in the absence of DNA, dimers are assembled into helical cylinders with six dimers per turn. In solution, predominantly behaves as a dimer.

With respect to regulation, in the famine mode, FL11 forms dimers and acts as a repressor, leading to growth arrest. In the feast mode, in the presence of high concentrations of lysine or arginine, four dimers assemble into an octamer and cover the fl11 and lysine biosynthesis promoters. This leads to the inhibition of fl11 expression and lysine biosynthesis, decrease of the FL11 concentration in the cell, derepression of the target genes and activation of the metabolism. DNA-binding protein involved in the repression of transcription of a large number of genes, thereby arresting growth, in response to environmental changes. Binding sites are identified in promoters of approximately 200 transcription units, including genes involved in ATP synthesis, transmembrane transport, translation and DNA synthesis. This is HTH-type transcriptional regulator FL11 from Pyrococcus horikoshii (strain ATCC 700860 / DSM 12428 / JCM 9974 / NBRC 100139 / OT-3).